The following is a 507-amino-acid chain: Carnosic acid synthase (507 aa).

The chain crosses the membrane as a helical span at residues 6-23; the sequence is VFSLAFLAAWFIVVFPRW. Cys450 lines the heme pocket.

Belongs to the cytochrome P450 family. Heme serves as cofactor. In terms of tissue distribution, expressed in glandular trichomes of young leaves.

The protein resides in the membrane. The catalysed reaction is 11-hydroxyferruginol + 3 reduced [NADPH--hemoprotein reductase] + 3 O2 = carnosate + 3 oxidized [NADPH--hemoprotein reductase] + 4 H2O + 4 H(+). It catalyses the reaction miltiradiene + 2 reduced [NADPH--hemoprotein reductase] + 2 O2 = miltiradien-20-al + 2 oxidized [NADPH--hemoprotein reductase] + 3 H2O + 2 H(+). The enzyme catalyses ferruginol + 3 reduced [NADPH--hemoprotein reductase] + 3 O2 = pisiferate + 3 oxidized [NADPH--hemoprotein reductase] + 4 H2O + 4 H(+). It functions in the pathway secondary metabolite biosynthesis; terpenoid biosynthesis. In terms of biological role, monooxygenase involved in the biosynthesis of carnosate, a potent antioxidant labdane-related diterpene natural product. Catalyzes the oxidation of 11-hydroxyferruginol to produce carnosate. Mediates the conversion of miltiradien into miltiradien-20-al. Also involved in the production of pisiferic acid and derivative products from ferruginol. This Rosmarinus officinalis (Rosemary) protein is Carnosic acid synthase.